An 848-amino-acid polypeptide reads, in one-letter code: Probable disease resistance protein At5g43730 (848 aa).

Positions 25 to 62 (SNYIHLMESNLDALQKTMEELKNGRDDLLARVSIEEDK) form a coiled coil. One can recognise an NB-ARC domain in the interval 137–439 (VAQKIIPKAE…CEGYINPNRY (303 aa)). 179–186 (GMGGIGKT) provides a ligand contact to ATP. LRR repeat units follow at residues 534–555 (NLST…FFLF), 558–580 (KLVV…ISNL), 582–604 (SLQY…KKLR), 605–627 (KLIY…ATTL), and 629–649 (NLQV…IMEE).

It belongs to the disease resistance NB-LRR family.

Its function is as follows. Probable disease resistance protein. The chain is Probable disease resistance protein At5g43730 from Arabidopsis thaliana (Mouse-ear cress).